We begin with the raw amino-acid sequence, 307 residues long: MSITAAQVKELRELSGAGMMDCKAALAETNGDMEAAVDWLRKKGIAKADKKAGRTAAEGLIGVVSQDLSAVLVEINSETDFVARNDVFQDIVRNVATAALGTEGSIDAVCASFYPGSEKTVEATIKDAIATIGENMTFRRSAKLSVEDGVVATYIHNSVAEGLGKLGVLVAIETTGNKKAAAAFGRQVAMHIAATNPLALTAEDVDSSAIEREKAIFSEQARQSGKPENIIEKMVEGRMRKFFEEVVLLSQAFVMNPDITVDAALKDAEKSIGAPAKITAFIRFALGEGVEKEESDFAAEVAAAAKG.

Residues 79 to 82 (TDFV) form an involved in Mg(2+) ion dislocation from EF-Tu region.

The protein belongs to the EF-Ts family.

It is found in the cytoplasm. Associates with the EF-Tu.GDP complex and induces the exchange of GDP to GTP. It remains bound to the aminoacyl-tRNA.EF-Tu.GTP complex up to the GTP hydrolysis stage on the ribosome. The sequence is that of Elongation factor Ts from Bartonella henselae (strain ATCC 49882 / DSM 28221 / CCUG 30454 / Houston 1) (Rochalimaea henselae).